Consider the following 37-residue polypeptide: Delta-amaurobitoxin-Pl1a (37 aa).

4 disulfide bridges follow: Cys2/Cys18, Cys9/Cys23, Cys17/Cys33, and Cys25/Cys31. Ser37 is modified (serine amide).

Belongs to the neurotoxin 07 (Beta/delta-agtx) family. 02 (aga-3) subfamily. In terms of tissue distribution, expressed by the venom gland.

Its subcellular location is the secreted. Binds at site 4 of sodium channels (Nav) and inhibits the fast inactivation of cockroach channels. This toxin is active only on insects. Has a potent activity against S.litura larvae. The sequence is that of Delta-amaurobitoxin-Pl1a from Pireneitega luctuosa (Tangled nest spider).